The following is a 229-amino-acid chain: Prolactin (229 aa).

Positions 1 to 30 (MDSKVSSQKGSRLLLLLVVSNLLLCQGVVS) are cleaved as a signal peptide. Cys34 and Cys41 are joined by a disulfide. Ser56, Ser64, and Ser120 each carry phosphoserine. 2 disulfide bridges follow: Cys88-Cys204 and Cys221-Cys229.

It belongs to the somatotropin/prolactin family. Interacts with PRLR.

Its subcellular location is the secreted. In terms of biological role, prolactin acts primarily on the mammary gland by promoting lactation. The sequence is that of Prolactin (PRL) from Cervus elaphus (Red deer).